A 430-amino-acid polypeptide reads, in one-letter code: 3-phosphoshikimate 1-carboxyvinyltransferase (430 aa).

3-phosphoshikimate contacts are provided by Lys23, Ser24, and Arg28. Residue Lys23 participates in phosphoenolpyruvate binding. Residues Gly95 and Arg123 each contribute to the phosphoenolpyruvate site. Residues Ser169, Gln171, Asp315, and Lys342 each coordinate 3-phosphoshikimate. Gln171 lines the phosphoenolpyruvate pocket. Asp315 serves as the catalytic Proton acceptor. Residues Arg346 and Arg388 each coordinate phosphoenolpyruvate.

This sequence belongs to the EPSP synthase family. In terms of assembly, monomer.

Its subcellular location is the cytoplasm. It carries out the reaction 3-phosphoshikimate + phosphoenolpyruvate = 5-O-(1-carboxyvinyl)-3-phosphoshikimate + phosphate. It functions in the pathway metabolic intermediate biosynthesis; chorismate biosynthesis; chorismate from D-erythrose 4-phosphate and phosphoenolpyruvate: step 6/7. In terms of biological role, catalyzes the transfer of the enolpyruvyl moiety of phosphoenolpyruvate (PEP) to the 5-hydroxyl of shikimate-3-phosphate (S3P) to produce enolpyruvyl shikimate-3-phosphate and inorganic phosphate. This chain is 3-phosphoshikimate 1-carboxyvinyltransferase, found in Streptococcus pyogenes serotype M6 (strain ATCC BAA-946 / MGAS10394).